A 308-amino-acid chain; its full sequence is Protein translocase subunit SecF (308 aa).

Transmembrane regions (helical) follow at residues 28–48 (SIIL…NFGI), 140–160 (IEAG…YIWV), 164–184 (WYFG…ALGF), 194–214 (LSTI…SVVI), 246–266 (ILTV…GGEA), and 272–292 (VLVF…SAPI).

The protein belongs to the SecD/SecF family. SecF subfamily. Forms a complex with SecD. Part of the essential Sec protein translocation apparatus which comprises SecA, SecYEG and auxiliary proteins SecDF-YajC and YidC.

It localises to the cell inner membrane. Functionally, part of the Sec protein translocase complex. Interacts with the SecYEG preprotein conducting channel. SecDF uses the proton motive force (PMF) to complete protein translocation after the ATP-dependent function of SecA. The sequence is that of Protein translocase subunit SecF from Rickettsia conorii (strain ATCC VR-613 / Malish 7).